Here is a 199-residue protein sequence, read N- to C-terminus: Putative inactive ribonuclease 11 (199 aa).

The signal sequence occupies residues 1-16 (METFPLLLLSLGLVLA). A glycan (N-linked (GlcNAc...) asparagine) is linked at asparagine 61. Histidine 82 serves as the catalytic Proton acceptor. N-linked (GlcNAc...) asparagine glycans are attached at residues asparagine 89 and asparagine 111. Disulfide bonds link cysteine 98/cysteine 158 and cysteine 114/cysteine 169. 115-119 (KWSNN) contributes to the substrate binding site.

Belongs to the pancreatic ribonuclease family.

It is found in the secreted. The sequence is that of Putative inactive ribonuclease 11 (RNASE11) from Homo sapiens (Human).